The following is a 590-amino-acid chain: L-fucose isomerase (590 aa).

Residues Glu-337 and Asp-361 each act as proton acceptor in the active site. 3 residues coordinate Mn(2+): Glu-337, Asp-361, and His-528.

Belongs to the L-fucose isomerase family. It depends on Mn(2+) as a cofactor.

The protein localises to the cytoplasm. It catalyses the reaction L-fucose = L-fuculose. It functions in the pathway carbohydrate degradation; L-fucose degradation; L-lactaldehyde and glycerone phosphate from L-fucose: step 1/3. Functionally, converts the aldose L-fucose into the corresponding ketose L-fuculose. In Bacteroides fragilis (strain YCH46), this protein is L-fucose isomerase.